Consider the following 472-residue polypeptide: Protein translocase subunit SecD (472 aa).

The next 6 membrane-spanning stretches (helical) occupy residues 7–27 (LLLLIVVLVIGASFVLVKLPL), 298–318 (LVAGFVGLVLVLVFMAVYYRL), 326–345 (SLMIYAVLTLAAFALVGVTL), 349–368 (GIAGFILSIGMAVDANVLIF), 392–414 (AFSSILDSNVTTLIACAALFWFG), and 432–452 (SLFTALTCSRTLLLVIVLSLP).

The protein belongs to the SecD/SecF family. SecD subfamily. Forms a complex with SecF. Part of the essential Sec protein translocation apparatus which comprises SecA, SecYEG and auxiliary proteins SecDF. Other proteins may also be involved.

Its subcellular location is the cell inner membrane. Functionally, part of the Sec protein translocase complex. Interacts with the SecYEG preprotein conducting channel. SecDF uses the proton motive force (PMF) to complete protein translocation after the ATP-dependent function of SecA. In terms of biological role, probably participates in protein translocation into and across both the cytoplasmic and thylakoid membranes in cyanobacterial cells. This chain is Protein translocase subunit SecD, found in Synechocystis sp. (strain ATCC 27184 / PCC 6803 / Kazusa).